The chain runs to 357 residues: Eukaryotic translation initiation factor 3 subunit F (357 aa).

The MPN domain occupies 30–169 (VHIQPQAVFS…TKAYISAPVA (140 aa)). The segment at 309 to 357 (VGGDKEGGEKGKDGEDGGRGGRGGKRGGGGRGGHRGEPREPREPREPAE) is disordered. 2 stretches are compositionally biased toward basic and acidic residues: residues 311–327 (GDKEGGEKGKDGEDGGR) and 342–357 (HRGEPREPREPREPAE).

This sequence belongs to the eIF-3 subunit F family. Component of the eukaryotic translation initiation factor 3 (eIF-3) complex.

The protein localises to the cytoplasm. Its function is as follows. Component of the eukaryotic translation initiation factor 3 (eIF-3) complex, which is involved in protein synthesis of a specialized repertoire of mRNAs and, together with other initiation factors, stimulates binding of mRNA and methionyl-tRNAi to the 40S ribosome. The eIF-3 complex specifically targets and initiates translation of a subset of mRNAs involved in cell proliferation. This Chaetomium globosum (strain ATCC 6205 / CBS 148.51 / DSM 1962 / NBRC 6347 / NRRL 1970) (Soil fungus) protein is Eukaryotic translation initiation factor 3 subunit F.